The sequence spans 230 residues: 7-cyano-7-deazaguanine synthase (230 aa).

Residue 9–19 (LSGGLDSATTA) participates in ATP binding. Zn(2+) is bound by residues Cys-190, Cys-198, Cys-201, and Cys-204.

It belongs to the QueC family. Zn(2+) is required as a cofactor.

It carries out the reaction 7-carboxy-7-deazaguanine + NH4(+) + ATP = 7-cyano-7-deazaguanine + ADP + phosphate + H2O + H(+). It participates in purine metabolism; 7-cyano-7-deazaguanine biosynthesis. Functionally, catalyzes the ATP-dependent conversion of 7-carboxy-7-deazaguanine (CDG) to 7-cyano-7-deazaguanine (preQ(0)). This is 7-cyano-7-deazaguanine synthase from Microcystis aeruginosa (strain NIES-843 / IAM M-2473).